Consider the following 194-residue polypeptide: MLGLCLHQVRYAAQDIPAAKSARARGSYLRVSFKNTRETAQAINGMKLQRALAFLENVKNKTEVVPFRRYAGSIGRTAQGKQWGVSKARWPVKSAQFLLDLLKNAEANADTKGLDTGNLIVKHIQVNQAPKGRRRTYRAHGRINPYMTNPCHIELILTEGEETVQKAPQVVKKEGAHLSSRQRGAQIRRALIEA.

The protein belongs to the universal ribosomal protein uL22 family.

The sequence is that of Large ribosomal subunit protein uL22 (rpl17) from Aspergillus fumigatus (strain ATCC MYA-4609 / CBS 101355 / FGSC A1100 / Af293) (Neosartorya fumigata).